Consider the following 57-residue polypeptide: UPF0391 membrane protein azo1765 (57 aa).

The next 2 membrane-spanning stretches (helical) occupy residues 1–21 (MIKW…FGFT) and 33–53 (VLFF…VGLG).

Belongs to the UPF0391 family.

It localises to the cell membrane. In Azoarcus sp. (strain BH72), this protein is UPF0391 membrane protein azo1765.